The chain runs to 75 residues: UPF0346 protein OB1736 (75 aa).

Belongs to the UPF0346 family.

The polypeptide is UPF0346 protein OB1736 (Oceanobacillus iheyensis (strain DSM 14371 / CIP 107618 / JCM 11309 / KCTC 3954 / HTE831)).